A 284-amino-acid polypeptide reads, in one-letter code: MKQKVVSIGDINVANDLPFVLFGGMNVLESRDLAMRICEHYVTVTQKLGIPYVFKASFDKANRSSIHSYRGPGLEEGMKIFQELKQTFGVKIITDVHEPSQAQPVADVVDVIQLPAFLARQTDLVEAMAKTGAVINVKKPQFVSPGQMGNIVDKFKEGGNEKVILCDRGANFGYDNLVVDMLGFSIMKKVSGNSPVIFDVTHALQCRDPFGAASGGRRAQVTELARAGMAVGLAGLFIEAHPDPEHAKCDGPSALPLAKLEPFLKQMKAIDDLVKGFEELDTSK.

Belongs to the KdsA family.

Its subcellular location is the cytoplasm. The enzyme catalyses D-arabinose 5-phosphate + phosphoenolpyruvate + H2O = 3-deoxy-alpha-D-manno-2-octulosonate-8-phosphate + phosphate. It participates in carbohydrate biosynthesis; 3-deoxy-D-manno-octulosonate biosynthesis; 3-deoxy-D-manno-octulosonate from D-ribulose 5-phosphate: step 2/3. The protein operates within bacterial outer membrane biogenesis; lipopolysaccharide biosynthesis. This chain is 2-dehydro-3-deoxyphosphooctonate aldolase, found in Escherichia coli O6:H1 (strain CFT073 / ATCC 700928 / UPEC).